The following is a 324-amino-acid chain: Myoblast determination protein 1 homolog (324 aa).

Residues 125–146 (VDSQHEDTTTSTAGGAGVGGPR) are disordered. The region spanning 155–206 (DRRKAATMRERRRLRKVNEAFEVVKQRTCPNPNQRLPKVEILRSAIDYINNL) is the bHLH domain. Residues 251–272 (YNPENMFDDDDLTDSDDDRDHH) form a disordered region. Residues 256-267 (MFDDDDLTDSDD) are compositionally biased toward acidic residues.

As to quaternary structure, efficient DNA binding requires dimerization with another bHLH protein. Body wall muscle cells; in clonal muscle precursors, in a set of early embryonic blastomeres (the ms-granddaughters), and in six glial-like cells called GLRS.

The protein localises to the nucleus. Functionally, involved in myogenesis, in cooperation with transcription factors unc-120 and hnd-1. Acts redundantly with fozi-1 to promote body wall muscle cell and coelomocyte specification in postembryonic mesoderm progenitors, probably through suppression of sem-2. The chain is Myoblast determination protein 1 homolog from Caenorhabditis elegans.